A 185-amino-acid chain; its full sequence is Elongation factor P (185 aa).

It belongs to the elongation factor P family.

The protein localises to the cytoplasm. It participates in protein biosynthesis; polypeptide chain elongation. Functionally, involved in peptide bond synthesis. Stimulates efficient translation and peptide-bond synthesis on native or reconstituted 70S ribosomes in vitro. Probably functions indirectly by altering the affinity of the ribosome for aminoacyl-tRNA, thus increasing their reactivity as acceptors for peptidyl transferase. This is Elongation factor P from Oceanobacillus iheyensis (strain DSM 14371 / CIP 107618 / JCM 11309 / KCTC 3954 / HTE831).